We begin with the raw amino-acid sequence, 264 residues long: Teichoic acids export ATP-binding protein TagH (264 aa).

An ABC transporter domain is found at 5–243 (VNIKNVTKEY…YEAFLNDFKK (239 aa)). 57–64 (GINGSGKS) contacts ATP.

The protein belongs to the ABC transporter superfamily. Teichoic acids exporter (TC 3.A.1.104.1) family. In terms of assembly, the complex is composed of two ATP-binding proteins (TagH) and two transmembrane proteins (TagG).

The protein localises to the cell membrane. The catalysed reaction is ATP + H2O + teichoic acidSide 1 = ADP + phosphate + teichoic acidSide 2.. In terms of biological role, part of the ABC transporter complex TagGH involved in teichoic acids export. Responsible for energy coupling to the transport system. In Staphylococcus aureus (strain USA300), this protein is Teichoic acids export ATP-binding protein TagH.